Here is a 35-residue protein sequence, read N- to C-terminus: MRSLVFVQLSLLSWEIFCGERSFVSMKAIFSCMYV.

The signal sequence occupies residues 1-18; that stretch reads MRSLVFVQLSLLSWEIFC.

This is an uncharacterized protein from Saccharomyces cerevisiae (strain ATCC 204508 / S288c) (Baker's yeast).